A 254-amino-acid chain; its full sequence is 5'/3'-nucleotidase SurE (254 aa).

Residues Asp9, Asp10, Ser40, and Asn93 each coordinate a divalent metal cation.

This sequence belongs to the SurE nucleotidase family. A divalent metal cation serves as cofactor.

It is found in the cytoplasm. The catalysed reaction is a ribonucleoside 5'-phosphate + H2O = a ribonucleoside + phosphate. The enzyme catalyses a ribonucleoside 3'-phosphate + H2O = a ribonucleoside + phosphate. It catalyses the reaction [phosphate](n) + H2O = [phosphate](n-1) + phosphate + H(+). In terms of biological role, nucleotidase with a broad substrate specificity as it can dephosphorylate various ribo- and deoxyribonucleoside 5'-monophosphates and ribonucleoside 3'-monophosphates with highest affinity to 3'-AMP. Also hydrolyzes polyphosphate (exopolyphosphatase activity) with the preference for short-chain-length substrates (P20-25). Might be involved in the regulation of dNTP and NTP pools, and in the turnover of 3'-mononucleotides produced by numerous intracellular RNases (T1, T2, and F) during the degradation of various RNAs. The sequence is that of 5'/3'-nucleotidase SurE from Photorhabdus laumondii subsp. laumondii (strain DSM 15139 / CIP 105565 / TT01) (Photorhabdus luminescens subsp. laumondii).